The chain runs to 602 residues: Glutaminase liver isoform, mitochondrial (602 aa).

A mitochondrion-targeting transit peptide spans 1–14; that stretch reads MRSMRALQNALSRA. Disordered regions lie at residues 1-28 and 46-67; these read MRSM…HPSR and QGRG…SNSG. Ser219 is a binding site for substrate. N6-succinyllysine is present on Lys253. Residue Asn268 coordinates substrate. Residues Lys279 and Lys284 each carry the N6-acetyllysine modification. Residues Glu314 and Asn321 each coordinate substrate. N6-acetyllysine is present on Lys329. Residues Tyr347, Tyr399, and Val417 each contribute to the substrate site. ANK repeat units follow at residues 518 to 551 and 552 to 585; these read DSRT…VKDR and WGNI…SETQ.

This sequence belongs to the glutaminase family. As to quaternary structure, homotetramer, dimer of dimers. Does not assemble into higher oligomers. Interacts with the PDZ domain of the syntrophin SNTA1. Interacts with the PDZ domain of TAX1BP3. In terms of tissue distribution, liver specific.

The protein resides in the mitochondrion. The catalysed reaction is L-glutamine + H2O = L-glutamate + NH4(+). In terms of biological role, plays an important role in the regulation of glutamine catabolism. Promotes mitochondrial respiration and increases ATP generation in cells by catalyzing the synthesis of glutamate and alpha-ketoglutarate. Increases cellular anti-oxidant function via NADH and glutathione production. May play a role in preventing tumor proliferation. This Rattus norvegicus (Rat) protein is Glutaminase liver isoform, mitochondrial (Gls2).